Here is an 806-residue protein sequence, read N- to C-terminus: Acetyl-CoA decarbonylase/synthase complex subunit alpha 1 (806 aa).

Cys-73, Cys-76, Cys-77, Cys-79, Cys-84, and Cys-94 together coordinate [4Fe-4S] cluster. His-117 contacts CO. [Ni-4Fe-4S] cluster-binding residues include His-250, Cys-278, and Cys-323. 4Fe-4S ferredoxin-type domains lie at 407–436 (DEQM…IPEA) and 445–475 (YSYL…LSVI). The [4Fe-4S] cluster site is built by Cys-417, Cys-420, Cys-423, Cys-427, Cys-455, Cys-458, Cys-461, and Cys-465. [Ni-4Fe-4S] cluster-binding residues include Cys-523, Cys-552, and Cys-587.

It belongs to the Ni-containing carbon monoxide dehydrogenase family. As to quaternary structure, heterotetramer of two alpha and two epsilon subunits. The ACDS complex is made up of alpha, epsilon, beta, gamma and delta subunits with a probable stoichiometry of (alpha(2)epsilon(2))(4)-beta(8)-(gamma(1)delta(1))(8). Requires [4Fe-4S] cluster as cofactor. The cofactor is [Ni-4Fe-4S] cluster.

It catalyses the reaction CO + 2 oxidized [2Fe-2S]-[ferredoxin] + H2O = 2 reduced [2Fe-2S]-[ferredoxin] + CO2 + 2 H(+). The protein operates within one-carbon metabolism; methanogenesis from acetate. In terms of biological role, part of the ACDS complex that catalyzes the reversible cleavage of acetyl-CoA, allowing growth on acetate as sole source of carbon and energy. The alpha-epsilon subcomponent functions as a carbon monoxide dehydrogenase. In Methanosarcina thermophila, this protein is Acetyl-CoA decarbonylase/synthase complex subunit alpha 1.